The sequence spans 215 residues: Glutathione S-transferase F10 (215 aa).

The region spanning 2–81 is the GST N-terminal domain; sequence VLTIYAPLFA…YIAEKYRSQG (80 aa). Glutathione contacts are provided by residues 11 to 12, 39 to 40, 52 to 53, and 65 to 66; these read AS, QR, KI, and ES. The GST C-terminal domain maps to 88–215; sequence TIEERGQVEQ…EVSAKYSLPV (128 aa).

This sequence belongs to the GST superfamily. Phi family. As to quaternary structure, interacts with BAK1. As to expression, expressed in roots, stems, floral buds, mature flowers and leaves.

It is found in the cytoplasm. The protein resides in the cytosol. The catalysed reaction is RX + glutathione = an S-substituted glutathione + a halide anion + H(+). Its function is as follows. In vitro, possesses glutathione S-transferase activity toward 1-chloro-2,4-dinitrobenzene (CDNB) and benzyl isothiocyanate (BITC). May be involved in the conjugation of reduced glutathione to a wide number of exogenous and endogenous hydrophobic electrophiles and have a detoxification role against certain herbicides. The protein is Glutathione S-transferase F10 of Arabidopsis thaliana (Mouse-ear cress).